A 307-amino-acid chain; its full sequence is GTPase Era (307 aa).

The 171-residue stretch at 14-184 (HSGFVAIVGK…REQILDILPE (171 aa)) folds into the Era-type G domain. The tract at residues 22 to 29 (GKPNVGKS) is G1. 22–29 (GKPNVGKS) lines the GTP pocket. Residues 48–52 (QTTRR) are G2. A G3 region spans residues 69–72 (DTPG). Residues 69–73 (DTPGL) and 131–134 (NKTD) each bind GTP. Residues 131–134 (NKTD) are G4. The interval 162–164 (LSA) is G5. The KH type-2 domain occupies 215–292 (LREELPYAVA…FLGLEVIVIP (78 aa)).

It belongs to the TRAFAC class TrmE-Era-EngA-EngB-Septin-like GTPase superfamily. Era GTPase family. Monomer.

The protein resides in the cytoplasm. It localises to the cell membrane. Its function is as follows. An essential GTPase that binds both GDP and GTP, with rapid nucleotide exchange. Plays a role in 16S rRNA processing and 30S ribosomal subunit biogenesis and possibly also in cell cycle regulation and energy metabolism. The chain is GTPase Era from Deinococcus deserti (strain DSM 17065 / CIP 109153 / LMG 22923 / VCD115).